We begin with the raw amino-acid sequence, 504 residues long: Cytochrome P450 monooxygenase gsfF (504 aa).

Positions 1–16 (MTVLFILSAGLVAVFG) are cleaved as a signal peptide. N-linked (GlcNAc...) asparagine glycosylation is found at N97 and N150. Residue C450 participates in heme binding.

This sequence belongs to the cytochrome P450 family. Requires heme as cofactor.

The enzyme catalyses griseophenone B + reduced [NADPH--hemoprotein reductase] + O2 + H(+) = desmethyl-dehydrogriseofulvin + oxidized [NADPH--hemoprotein reductase] + 2 H2O. It functions in the pathway secondary metabolite biosynthesis; terpenoid biosynthesis. Cytochrome P450 monooxygenase; part of the gene cluster that mediates the biosynthesis of griseofulvin, an important antifungal drug that has been in use for a long time for treating dermatophyte infections. The first step of the pathway is the formation of the heptaketide backbone by gsfA which is initiated by priming with acetyl-CoA, followed by sequential condensations of 6 malonyl-CoA units. The resulting benzophenone can undergo a spontaneous dehydration to form norlichexanthone. However, the true precursor for the griseofulvin biosynthesis is not norlichexanthone, but the heptaketide benzophenone that is O-methylated at 3-OH by gsfB to produce griseophenone D which is further methylated at 9-OH by gsfC to yield griseophenone C. Griseophenone C is then substrate of halogenase gsfI which is responsible for the regio-specific chlorination at the C13 position to form griseophenone B. The cytochrome P450 gsfF catalyzes the coupling of orcinol and phloroglucinol rings in griseophenone B to form desmethyl-dehydrogriseofulvin A which is further methylated at 5-OH by gsfD to yield dehydrogriseofulvin. Finally, gsfE performs stereospecific reduction of enone 18 of dehydrogriseofulvin to afford the final product griseofulvin. This chain is Cytochrome P450 monooxygenase gsfF, found in Penicillium aethiopicum.